We begin with the raw amino-acid sequence, 352 residues long: Sortase SrtE1 (352 aa).

2 stretches are compositionally biased toward basic and acidic residues: residues M1 to S10 and R34 to R45. The interval M1–A132 is disordered. At M1–A139 the chain is on the cytoplasmic side. Residues D15 to G79 form a required for protein stability region. The span at G71–R82 shows a compositional bias: gly residues. The span at A83–G97 shows a compositional bias: basic residues. The chain crosses the membrane as a helical span at residues I140–W160. Residues W161–S352 are Extracellular-facing. Catalysis depends on residues H251 and C320. The active-site Proton donor is R329.

Belongs to the bacterial sortase family. Class E subfamily.

The protein localises to the cell membrane. The enzyme catalyses The enzyme catalyzes a cell wall sorting reaction in which a surface protein with a sorting signal containing a LPXTG motif is cleaved between the Thr and Gly residue. The resulting threonine carboxyl end of the protein is covalently attached to a pentaglycine cross-bridge of peptidoglycan.. Functionally, transpeptidase that anchors surface proteins to the cell wall. Recognizes both Leu-Ala-x-Thr-Gly and Leu-Pro-x-Thr-Gly, with a preference for the former. Unlike the S.aureus sortase it cleaves not only the Thr-Gly motif but also the Ala-X bond; Ala-Glu and Ala-His bonds are better substrates than the Thr-Gly motif in vitro. Among its possible substrates are the chaplins ChpA, ChpB and ChpC; this enzyme is less important for ChpC attachment than is SrtE2. A double knockout mutant of srtE1 and srtE2 shows a developmental defect in aerial hyphae formation more dramatic than that due to chaplin deletion. In Streptomyces coelicolor (strain ATCC BAA-471 / A3(2) / M145), this protein is Sortase SrtE1.